The chain runs to 423 residues: Methionine aminopeptidase 2 (423 aa).

A compositionally biased stretch (basic and acidic residues) spans 1–17; that stretch reads MTDVIDAKPEEAKKVPP. The segment at 1–89 is disordered; it reads MTDVIDAKPE…IQPYKDDNAY (89 aa). The span at 18-29 shows a compositional bias: acidic residues; that stretch reads EVEDEDSGDESA. Residues 41–54 show a composition bias toward basic residues; it reads KKKKKKKKPKKKKK. Position 176 (H176) interacts with substrate. A divalent metal cation is bound by residues D196, D207, and H276. H284 contributes to the substrate binding site. 2 residues coordinate a divalent metal cation: E309 and E404.

Belongs to the peptidase M24A family. Methionine aminopeptidase eukaryotic type 2 subfamily. It depends on Co(2+) as a cofactor. Requires Zn(2+) as cofactor. Mn(2+) serves as cofactor. The cofactor is Fe(2+).

Its subcellular location is the cytoplasm. The enzyme catalyses Release of N-terminal amino acids, preferentially methionine, from peptides and arylamides.. Cotranslationally removes the N-terminal methionine from nascent proteins. The N-terminal methionine is often cleaved when the second residue in the primary sequence is small and uncharged (Met-Ala-, Cys, Gly, Pro, Ser, Thr, or Val). The sequence is that of Methionine aminopeptidase 2 from Schizophyllum commune (strain H4-8 / FGSC 9210) (Split gill fungus).